Consider the following 199-residue polypeptide: NADH-quinone oxidoreductase subunit C (199 aa).

The protein belongs to the complex I 30 kDa subunit family. In terms of assembly, NDH-1 is composed of 14 different subunits. Subunits NuoB, C, D, E, F, and G constitute the peripheral sector of the complex.

Its subcellular location is the cell inner membrane. The catalysed reaction is a quinone + NADH + 5 H(+)(in) = a quinol + NAD(+) + 4 H(+)(out). In terms of biological role, NDH-1 shuttles electrons from NADH, via FMN and iron-sulfur (Fe-S) centers, to quinones in the respiratory chain. The immediate electron acceptor for the enzyme in this species is believed to be ubiquinone. Couples the redox reaction to proton translocation (for every two electrons transferred, four hydrogen ions are translocated across the cytoplasmic membrane), and thus conserves the redox energy in a proton gradient. The polypeptide is NADH-quinone oxidoreductase subunit C (Rhodopseudomonas palustris (strain BisB18)).